The primary structure comprises 90 residues: Small ribosomal subunit protein bS20 (90 aa).

This sequence belongs to the bacterial ribosomal protein bS20 family.

Its function is as follows. Binds directly to 16S ribosomal RNA. The sequence is that of Small ribosomal subunit protein bS20 from Rickettsia canadensis (strain McKiel).